Here is a 239-residue protein sequence, read N- to C-terminus: Large ribosomal subunit protein bL25 (239 aa).

The segment at 211–239 (KGKKDKEDEEAEKGTSVASPTTATGGTKK) is disordered. Positions 226-239 (SVASPTTATGGTKK) are enriched in polar residues.

The protein belongs to the bacterial ribosomal protein bL25 family. CTC subfamily. In terms of assembly, part of the 50S ribosomal subunit; part of the 5S rRNA/L5/L18/L25 subcomplex. Contacts the 5S rRNA. Binds to the 5S rRNA independently of L5 and L18.

This is one of the proteins that binds to the 5S RNA in the ribosome where it forms part of the central protuberance. The protein is Large ribosomal subunit protein bL25 of Endomicrobium trichonymphae.